A 299-amino-acid polypeptide reads, in one-letter code: Hemolysin C homolog (299 aa).

2 consecutive CBS domains span residues 80–142 (MVPR…NGRL) and 145–202 (LIRK…IDDE).

The protein belongs to the UPF0053 family. Hemolysin C subfamily.

This chain is Hemolysin C homolog (tlyC), found in Rickettsia massiliae (strain Mtu5).